The primary structure comprises 224 residues: Cytidylate kinase (224 aa).

11–19 (GPAAAGKST) lines the ATP pocket.

It belongs to the cytidylate kinase family. Type 1 subfamily.

Its subcellular location is the cytoplasm. It catalyses the reaction CMP + ATP = CDP + ADP. The enzyme catalyses dCMP + ATP = dCDP + ADP. The sequence is that of Cytidylate kinase from Listeria welshimeri serovar 6b (strain ATCC 35897 / DSM 20650 / CCUG 15529 / CIP 8149 / NCTC 11857 / SLCC 5334 / V8).